Here is a 298-residue protein sequence, read N- to C-terminus: ADP/ATP translocase 3 (298 aa).

Residue Met1 is modified to N-acetylmethionine. At 1–7 (MTEQAIS) the chain is on the mitochondrial intermembrane side. The residue at position 2 (Thr2) is an N-acetylthreonine; in ADP/ATP translocase 3, N-terminally processed. A Solcar 1 repeat occupies 6–98 (ISFAKDFLAG…FAFKDKYKQI (93 aa)). The chain crosses the membrane as a helical span at residues 8–37 (FAKDFLAGGIAAAISKTAVAPIERVKLLLQ). Over 38 to 74 (VQHASKQIAADKQYKGIVDCIVRIPKEQGVLSFWRGN) the chain is Mitochondrial matrix. An N6,N6,N6-trimethyllysine modification is found at Lys52. Residues 75–99 (LANVIRYFPTQALNFAFKDKYKQIF) form a helical membrane-spanning segment. Residues Arg80 and Lys92 each contribute to the ADP site. At 100–109 (LGGVDKRTQF) the chain is on the mitochondrial intermembrane side. At Lys105 the chain carries N6-acetyllysine. A helical transmembrane segment spans residues 110–130 (WRYFAGNLASGGAAGATSLCF). Solcar repeat units lie at residues 111-201 (RYFA…AKGM) and 212-297 (VSWM…LKKV). The Mitochondrial matrix segment spans residues 131 to 178 (VYPLDFARTRLAADVGKSGSEREFRGLGDCLVKITKSDGIRGLYQGFN). Residues 179–199 (VSVQGIIIYRAAYFGIYDTAK) traverse the membrane as a helical segment. At 200–210 (GMLPDPKNTHI) the chain is on the mitochondrial intermembrane side. The helical transmembrane segment at 211-231 (VVSWMIAQTVTAVAGVVSYPF) threads the bilayer. The Mitochondrial matrix portion of the chain corresponds to 232–273 (DTVRRRMMMQSGRKGADIMYKGTVDCWRKILKDEGGKAFFKG). ADP is bound at residue Arg235. The important for transport activity stretch occupies residues 235-240 (RRRMMM). A Nucleotide carrier signature motif motif is present at residues 235–240 (RRRMMM). Lys268 bears the N6-acetyllysine mark. A helical transmembrane segment spans residues 274–291 (AWSNVLRGMGGAFVLVLY). Residues 292-298 (DELKKVI) lie on the Mitochondrial intermembrane side of the membrane.

This sequence belongs to the mitochondrial carrier (TC 2.A.29) family. Monomer. Found in a complex with ARL2, ARL2BP and SLC25A6/ANT3. Post-translationally, trimethylated by ANTKMT at Lys-52.

The protein resides in the mitochondrion inner membrane. The protein localises to the membrane. It carries out the reaction ADP(in) + ATP(out) = ADP(out) + ATP(in). The catalysed reaction is H(+)(in) = H(+)(out). Its activity is regulated as follows. The matrix-open state (m-state) is inhibited by the membrane-permeable bongkrekic acid (BKA). The cytoplasmic-open state (c-state) is inhibited by the membrane-impermeable toxic inhibitor carboxyatractyloside (CATR). Proton transporter activity is inhibited by ADP:ATP antiporter activity. Functionally, ADP:ATP antiporter that mediates import of ADP into the mitochondrial matrix for ATP synthesis, and export of ATP out to fuel the cell. Cycles between the cytoplasmic-open state (c-state) and the matrix-open state (m-state): operates by the alternating access mechanism with a single substrate-binding site intermittently exposed to either the cytosolic (c-state) or matrix (m-state) side of the inner mitochondrial membrane. In addition to its ADP:ATP antiporter activity, also involved in mitochondrial uncoupling and mitochondrial permeability transition pore (mPTP) activity. Plays a role in mitochondrial uncoupling by acting as a proton transporter: proton transport uncouples the proton flows via the electron transport chain and ATP synthase to reduce the efficiency of ATP production and cause mitochondrial thermogenesis. Proton transporter activity is inhibited by ADP:ATP antiporter activity, suggesting that SLC25A6/ANT3 acts as a master regulator of mitochondrial energy output by maintaining a delicate balance between ATP production (ADP:ATP antiporter activity) and thermogenesis (proton transporter activity). Proton transporter activity requires free fatty acids as cofactor, but does not transport it. Also plays a key role in mPTP opening, a non-specific pore that enables free passage of the mitochondrial membranes to solutes of up to 1.5 kDa, and which contributes to cell death. It is however unclear if SLC25A6/ANT3 constitutes a pore-forming component of mPTP or regulates it. This chain is ADP/ATP translocase 3, found in Bos taurus (Bovine).